We begin with the raw amino-acid sequence, 255 residues long: Serine/threonine-protein phosphatase PP1 (255 aa).

Residues aspartate 2, histidine 4, aspartate 30, and asparagine 62 each coordinate Mn(2+). Histidine 63 acts as the Proton donor in catalysis. Residues histidine 111 and histidine 186 each contribute to the Mn(2+) site.

This sequence belongs to the PPP phosphatase family. PP-1 subfamily. Mn(2+) is required as a cofactor.

The catalysed reaction is O-phospho-L-seryl-[protein] + H2O = L-seryl-[protein] + phosphate. It catalyses the reaction O-phospho-L-threonyl-[protein] + H2O = L-threonyl-[protein] + phosphate. The polypeptide is Serine/threonine-protein phosphatase PP1 (Brassica napus (Rape)).